A 124-amino-acid polypeptide reads, in one-letter code: Small ribosomal subunit protein uS13 (124 aa).

The segment at 94 to 124 is disordered; that stretch reads GLPLRGQRTKNNSRTRKGKRKTVANKKKATK. Residues 100 to 124 are compositionally biased toward basic residues; that stretch reads QRTKNNSRTRKGKRKTVANKKKATK.

Belongs to the universal ribosomal protein uS13 family. In terms of assembly, part of the 30S ribosomal subunit. Forms a loose heterodimer with protein S19. Forms two bridges to the 50S subunit in the 70S ribosome.

Its function is as follows. Located at the top of the head of the 30S subunit, it contacts several helices of the 16S rRNA. In the 70S ribosome it contacts the 23S rRNA (bridge B1a) and protein L5 of the 50S subunit (bridge B1b), connecting the 2 subunits; these bridges are implicated in subunit movement. Contacts the tRNAs in the A and P-sites. The polypeptide is Small ribosomal subunit protein uS13 (Flavobacterium johnsoniae (strain ATCC 17061 / DSM 2064 / JCM 8514 / BCRC 14874 / CCUG 350202 / NBRC 14942 / NCIMB 11054 / UW101) (Cytophaga johnsonae)).